We begin with the raw amino-acid sequence, 145 residues long: Protein SprT-like (145 aa).

One can recognise a SprT-like domain in the interval 4 to 141; the sequence is TDYVKEVSRQ…CGNCHGKLRH (138 aa). His-64 contacts Zn(2+). The active site involves Glu-65. His-68 contributes to the Zn(2+) binding site.

It belongs to the SprT family. It depends on Zn(2+) as a cofactor.

It is found in the cytoplasm. In Streptococcus mutans serotype c (strain ATCC 700610 / UA159), this protein is Protein SprT-like.